A 141-amino-acid chain; its full sequence is Hemoglobin subunit alpha-D (141 aa).

The Globin domain maps to 1–141 (MLTAEDKKLI…VAAVLAEKYR (141 aa)). Positions 58 and 87 each coordinate heme b.

Heterotetramer of two alpha-D chains and two beta chains. As to expression, red blood cells.

Its function is as follows. Involved in oxygen transport from the lung to the various peripheral tissues. This is Hemoglobin subunit alpha-D (HBAD) from Aythya fuligula (Tufted duck).